A 258-amino-acid chain; its full sequence is D-aminoacyl-tRNA deacylase (258 aa).

This sequence belongs to the DtdA deacylase family. Monomer. It depends on Zn(2+) as a cofactor.

The catalysed reaction is a D-aminoacyl-tRNA + H2O = a tRNA + a D-alpha-amino acid + H(+). It catalyses the reaction glycyl-tRNA(Ala) + H2O = tRNA(Ala) + glycine + H(+). Functionally, D-aminoacyl-tRNA deacylase with broad substrate specificity. By recycling D-aminoacyl-tRNA to D-amino acids and free tRNA molecules, this enzyme counteracts the toxicity associated with the formation of D-aminoacyl-tRNA entities in vivo. The sequence is that of D-aminoacyl-tRNA deacylase from Cenarchaeum symbiosum (strain A).